The sequence spans 446 residues: Argininosuccinate lyase (446 aa).

The protein belongs to the lyase 1 family. Argininosuccinate lyase subfamily.

It localises to the cytoplasm. The catalysed reaction is 2-(N(omega)-L-arginino)succinate = fumarate + L-arginine. It functions in the pathway amino-acid biosynthesis; L-arginine biosynthesis; L-arginine from L-ornithine and carbamoyl phosphate: step 3/3. This chain is Argininosuccinate lyase, found in Sulfurisphaera tokodaii (strain DSM 16993 / JCM 10545 / NBRC 100140 / 7) (Sulfolobus tokodaii).